Here is a 483-residue protein sequence, read N- to C-terminus: Pre-glycoprotein polyprotein GP complex (483 aa).

The N-myristoyl glycine; by host moiety is linked to residue Gly2. Over 2 to 17 (GQLVSFIGEIPAIVHE) the chain is Extracellular. Residues 18 to 32 (ALNVALIAVSIIAIM) traverse the membrane as a helical segment. Lys33 is a topological domain (cytoplasmic). A helical membrane pass occupies residues 34 to 53 (GLINIWKSGLFQLIMFLILA). Extracellular-side segments run 54–58 (GRSCS) and 59–422 (ISIG…SLVD). Cys57 serves as a coordination point for Zn(2+). N-linked (GlcNAc...) asparagine; by host glycans are attached at residues Asn73, Asn88, Asn130, and Asn179. Cystine bridges form between Cys85/Cys223, Cys186/Cys204, Cys269/Cys282, Cys291/Cys300, and Cys354/Cys375. Asn216 carries N-linked (GlcNAc...) asparagine; by host glycosylation. Asn355, Asn363, Asn380, and Asn385 each carry an N-linked (GlcNAc...) asparagine; by host glycan. The chain crosses the membrane as a helical span at residues 423–443 (LCFWSTLFYTASIFLHLLHIP). Topologically, residues 444–483 (THRHIIGEGCPKPHRLTSDSLCACGFFQLKGRPTRWARIP) are cytoplasmic. Positions 445, 447, 453, 457, 465, and 467 each coordinate Zn(2+).

Belongs to the arenaviridae GPC protein family. In terms of assembly, homotetramer; disulfide-linked. Homotetramer. GP2 homotetramers bind through ionic interactions with GP1 homotetramers to form the GP complex together with the stable signal peptide. The GP-C polyprotein interacts with the host protease MBTPS1/SKI-1 resulting in the polyprotein processing. In terms of processing, specific enzymatic cleavages in vivo yield mature proteins. GP-C polyprotein is cleaved in the endoplasmic reticulum by the host protease MBTPS1. Only cleaved glycoprotein is incorporated into virions. The SSP remains stably associated with the GP complex following cleavage by signal peptidase and plays crucial roles in the trafficking of GP through the secretory pathway. Post-translationally, myristoylation is necessary for GP2-mediated fusion activity.

It localises to the virion membrane. The protein resides in the host endoplasmic reticulum membrane. It is found in the host Golgi apparatus membrane. Its subcellular location is the host cell membrane. Class I viral fusion protein that directs fusion of viral and host endosomal membranes, leading to delivery of the nucleocapsid into the cytoplasm. Membrane fusion is mediated by irreversible conformational changes induced upon acidification in the endosome. Functionally, stable signal peptide (SSP): cleaved and functions as a signal peptide. In addition, it is also retained as the third component of the GP complex. The SSP is required for efficient glycoprotein expression, post-translational maturation cleavage of GP1 and GP2, glycoprotein transport to the cell surface plasma membrane, formation of infectious virus particles, and acid pH-dependent glycoprotein-mediated cell fusion. Its function is as follows. Interacts with the host receptor. This is Pre-glycoprotein polyprotein GP complex from Peromyscus californicus (California mouse).